We begin with the raw amino-acid sequence, 317 residues long: tRNA(Ile)-lysidine synthase (317 aa).

ATP is bound at residue serine 32–serine 37.

It belongs to the tRNA(Ile)-lysidine synthase family.

It localises to the cytoplasm. The enzyme catalyses cytidine(34) in tRNA(Ile2) + L-lysine + ATP = lysidine(34) in tRNA(Ile2) + AMP + diphosphate + H(+). In terms of biological role, ligates lysine onto the cytidine present at position 34 of the AUA codon-specific tRNA(Ile) that contains the anticodon CAU, in an ATP-dependent manner. Cytidine is converted to lysidine, thus changing the amino acid specificity of the tRNA from methionine to isoleucine. The protein is tRNA(Ile)-lysidine synthase of Aquifex aeolicus (strain VF5).